We begin with the raw amino-acid sequence, 410 residues long: E3 ubiquitin-protein ligase PRT1 (410 aa).

RING-type zinc fingers lie at residues 26–66 (CCVC…PICR) and 192–232 (CSAC…QECN). The segment at 306–370 (HFGAGCDSCG…RLELARSPQV (65 aa)) adopts a ZZ-type zinc-finger fold. 8 residues coordinate Zn(2+): Cys311, Cys314, Cys326, Cys329, Cys338, Cys341, His356, and His360. Residues 385-410 (ISNEGMDTDEGEEGPPGSSNESSSTE) are disordered. Positions 399–410 (PPGSSNESSSTE) are enriched in low complexity.

The protein resides in the cytoplasm. It carries out the reaction S-ubiquitinyl-[E2 ubiquitin-conjugating enzyme]-L-cysteine + [acceptor protein]-L-lysine = [E2 ubiquitin-conjugating enzyme]-L-cysteine + N(6)-ubiquitinyl-[acceptor protein]-L-lysine.. The protein operates within protein modification; protein ubiquitination. Functionally, E3 ubiquitin-protein ligase that mediates ubiquitination and subsequent proteasomal degradation of target proteins. Functions in the N-end rule pathway of protein degradation, where it specifically recognizes and ubiquitinates proteins with a N-terminal bulky aromatic amino acid (Phe). Does not act on aliphatic hydrophobic and basic N-terminal residues (Arg or Leu) containing proteins. In Arabidopsis thaliana (Mouse-ear cress), this protein is E3 ubiquitin-protein ligase PRT1 (PRT1).